A 343-amino-acid polypeptide reads, in one-letter code: Versiconal hemiacetal acetate reductase (343 aa).

The active-site Proton donor is the tyrosine 59. Position 144 (histidine 144) interacts with substrate. 229–239 (SPVARGALARP) provides a ligand contact to NADP(+).

Belongs to the aldo/keto reductase family. Aldo/keto reductase 2 subfamily.

The enzyme catalyses (2S)-versicolorone + NADP(+) = 1'-hydroxyversicolorone + NADPH + H(+). It catalyses the reaction (3S)-versiconol acetate + NADP(+) = (2S,3S)-versiconal hemiacetal acetate + NADPH + H(+). It carries out the reaction (S)-versiconol + NADP(+) = (2S-3S)-versiconal hemiacetal + NADPH + H(+). Its function is as follows. Catalyzes 3 reactions: from hydroxyversicolorone (HVN) to versicolorone (VONE), from versiconal hemiacetal acetate (VHA) to versiconol acetate (VOAc) and from versiconal (VHOH) to versiconol (VOH). Probably not an aflatoxin biosynthesis gene: may be involved in the vertical branching steps connecting the main pathway from HVN to VHOH with the side pathway from VONE to VOH. The protein is Versiconal hemiacetal acetate reductase (vrdA) of Aspergillus parasiticus.